The chain runs to 125 residues: Calcitonin gene-related peptide 1 (125 aa).

The signal sequence occupies residues 1-25 (MVMLKISSFLAVYALVVCQMDSFQA). The propeptide occupies 26-77 (APVRPGLESITDRVTLSDYEARRLLNALVKDFIQMTAEELEQASEGNSVTAQ). Cysteine 81 and cysteine 86 are oxidised to a cystine. Position 116 is a phenylalanine amide (phenylalanine 116). The propeptide occupies 122 to 125 (SVQI).

This sequence belongs to the calcitonin family.

Its subcellular location is the secreted. In terms of biological role, CGRP1/CALCA is a peptide hormone that induces vasodilation mediated by the CALCRL-RAMP1 receptor complex. Dilates a variety of vessels including the coronary, cerebral and systemic vasculature. Its abundance in the CNS also points toward a neurotransmitter or neuromodulator role. It also elevates platelet cAMP. CGRP1 can also bind and activate CALCR-RAMP1 (AMYR1) receptor complex. The polypeptide is Calcitonin gene-related peptide 1 (CALCA) (Gallus gallus (Chicken)).